Consider the following 410-residue polypeptide: MSSVIERFLRYAAIDTQSNEESQTTPSTGKQLNLARLLEQELKELGLQDARIQEGYVYGTLPANSTKAIPAIGFIAHMDTSPDFSGTDVKAQLVENYDGQDILLNPEHNLVLSPADFPELLDYIGKTLITTDGTTLLGADDKAGIAEIMTAIAYLTAHPEIEHGTICVAFTPDEEIGRGADQFDVAGFGADFAYTVDGGSIGELEYENFNAAKAIVKVKGRNVHPGNAKNKMINSILLANEYIVKLPPQETPATTEGYEGFYHLNDIRGDVEETTLYYIIRDFAEDSFAKRKETMLNLAEECNKKYGSGHFHVEITDQYKNMKEKIQPVMHIVDKAQKAMETVGVKPLIKPIRGGTDGSRLSFMGLPTPNLFTGGHNYHGRYEFIPTFAMEKSVEVILKIIELYAEEHSN.

His77 lines the Zn(2+) pocket. Residue Asp79 is part of the active site. Asp140 is a Zn(2+) binding site. Residue Glu174 is the Proton acceptor of the active site. Zn(2+) contacts are provided by Glu175, Asp197, and His379.

Belongs to the peptidase M20B family. Zn(2+) is required as a cofactor.

The protein localises to the cytoplasm. The enzyme catalyses Release of the N-terminal residue from a tripeptide.. In terms of biological role, cleaves the N-terminal amino acid of tripeptides. This Desulfitobacterium hafniense (strain DSM 10664 / DCB-2) protein is Peptidase T.